Consider the following 297-residue polypeptide: Lipoprotein NlpD/LppB homolog (297 aa).

An N-terminal signal peptide occupies residues 1 to 22 (MDKGEGLRLAATLRQWTRLYGG). C23 is lipidated: N-palmitoyl cysteine. C23 is lipidated: S-diacylglycerol cysteine. The 45-residue stretch at 67-111 (GQYIVRRGDTLYSIAFRFGWDWKALAARNGIAPPYTIQVGQAIQF) folds into the LysM domain. The tract at residues 134 to 168 (TKPTPVPPAVSTSVPAKPAPAPASTTTPPSSGATP) is disordered.

It belongs to the E.coli NlpD/Haemophilus LppB family.

The protein localises to the cell inner membrane. In Pseudomonas aeruginosa (strain ATCC 15692 / DSM 22644 / CIP 104116 / JCM 14847 / LMG 12228 / 1C / PRS 101 / PAO1), this protein is Lipoprotein NlpD/LppB homolog.